Here is a 2171-residue protein sequence, read N- to C-terminus: Voltage-dependent L-type calcium channel subunit alpha-1C (2171 aa).

Over 1-154 the chain is Cytoplasmic; it reads MLRALVQPAT…RACISIVEWK (154 aa). The interval 77–98 is calmodulin-binding; that stretch reads GAALSWQAAIDAARQAKLMGSA. The disordered stretch occupies residues 103-128; that stretch reads ISTVSSTQRKRQQYGKPKKQGSTTAT. The segment covering 110 to 121 has biased composition (basic residues); that stretch reads QRKRQQYGKPKK. The I repeat unit spans residues 141–438; that stretch reads NPIRRACISI…LVLGVLSGEF (298 aa). Residues 155-173 traverse the membrane as a helical segment; that stretch reads PFEIIILLTIFANCVALAI. The Extracellular portion of the chain corresponds to 174 to 188; the sequence is YIPFPEDDSNATNSN. Residue Asn-183 is glycosylated (N-linked (GlcNAc...) asparagine). The chain crosses the membrane as a helical span at residues 189–209; the sequence is LERVEYLFLIIFTVEAFLKVI. The Cytoplasmic portion of the chain corresponds to 210-218; sequence AYGLLFHPN. A helical transmembrane segment spans residues 219 to 239; it reads AYLRNGWNLLDFIIVVVGLFS. At 240–262 the chain is on the extracellular side; that stretch reads AILEQATKADGANALGGKGAGFD. The chain crosses the membrane as a helical span at residues 263-281; the sequence is VKALRAFRVLRPLRLVSGV. At 282–298 the chain is on the cytoplasmic side; it reads PSLQVVLNSIIKAMVPL. Residues 299 to 320 traverse the membrane as a helical segment; it reads LHIALLVLFVIIIYAIIGLELF. Residues 321 to 380 are Extracellular-facing; sequence MGKMHKTCYNQEGVADVPAEDDPSPCALETGHGRQCQNGTVCKPGWDGPKHGITNFDNFA. 2 cysteine pairs are disulfide-bonded: Cys-328/Cys-356 and Cys-346/Cys-362. Asn-358 carries an N-linked (GlcNAc...) asparagine glycan. Positions 381–402 form an intramembrane region, pore-forming; the sequence is FAMLTVFQCITMEGWTDVLYWM. The Selectivity filter of repeat I motif lies at 391-394; that stretch reads TMEG. Ca(2+) is bound at residue Glu-393. Residues 403 to 410 are Extracellular-facing; sequence QDAMGYEL. The helical transmembrane segment at 411 to 431 threads the bilayer; it reads PWVYFVSLVIFGSFFVLNLVL. At 432–554 the chain is on the cytoplasmic side; it reads GVLSGEFSKE…RKCRAAVKSN (123 aa). The segment at 458–475 is AID/alpha-interaction domain; mediates interaction with the beta subunit; sequence QQLEEDLKGYLDWITQAE. Residues 479 to 511 are disordered; that stretch reads PENEDEGMDEEKPRNMSMPTSETESVNTENVAG. Positions 495–508 are enriched in polar residues; that stretch reads SMPTSETESVNTEN. The residue at position 499 (Ser-499) is a Phosphoserine. Thr-506 carries the post-translational modification Phosphothreonine. Residues 540–786 form an II repeat; that stretch reads NRFCRRKCRA…VFLAIAVDNL (247 aa). A helical membrane pass occupies residues 555–573; sequence VFYWLVIFLVFLNTLTIAS. Over 574–584 the chain is Extracellular; the sequence is EHYNQPHWLTE. A helical transmembrane segment spans residues 585-605; it reads VQDTANKALLALFTAEMLLKM. Topologically, residues 606–616 are cytoplasmic; that stretch reads YSLGLQAYFVS. The chain crosses the membrane as a helical span at residues 617 to 636; it reads LFNRFDCFIVCGGILETILV. Over 637–645 the chain is Extracellular; the sequence is ETKVMSPLG. The helical transmembrane segment at 646–664 threads the bilayer; the sequence is ISVLRCVRLLRIFKITRYW. The Cytoplasmic segment spans residues 665 to 683; the sequence is NSLSNLVASLLNSVRSIAS. The chain crosses the membrane as a helical span at residues 684 to 703; that stretch reads LLLLLFLFIIIFSLLGMQLF. Over 704 to 723 the chain is Extracellular; the sequence is GGKFNFDEMQTRRSTFDNFP. The segment at residues 724–745 is an intramembrane region (pore-forming); it reads QSLLTVFQILTGEDWNSVMYDG. Residues 734–737 carry the Selectivity filter of repeat II motif; it reads TGED. Glu-736 lines the Ca(2+) pocket. The Extracellular portion of the chain corresponds to 746-755; that stretch reads IMAYGGPSFP. Residues 756–775 traverse the membrane as a helical segment; it reads GMLVCIYFIILFICGNYILL. Residues 776–930 lie on the Cytoplasmic side of the membrane; the sequence is NVFLAIAVDN…LQCHRIVNDT (155 aa). The disordered stretch occupies residues 794–891; that stretch reads SAQKEEEEEK…EMPVGPRPRP (98 aa). A compositionally biased stretch (basic and acidic residues) spans 813 to 836; that stretch reads SPEKKQEVVGKPALEEAKEEKIEL. A phosphoserine mark is found at Ser-838 and Ser-845. The interaction with STAC2 stretch occupies residues 859–906; sequence NESEDKSPYPNPETTGEEDEEEPEMPVGPRPRPLSELHLKEKAVPMPE. Residues 873-882 show a composition bias toward acidic residues; that stretch reads TGEEDEEEPE. Residues 917-1199 form an III repeat; it reads NRFRLQCHRI…IFVGFVIVTF (283 aa). The helical transmembrane segment at 931-949 threads the bilayer; that stretch reads IFTNLILFFILLSSISLAA. The Extracellular segment spans residues 950–961; it reads EDPVQHTSFRNH. Residues 962–981 form a helical membrane-spanning segment; that stretch reads ILFYFDIVFTTIFTIEIALK. Topologically, residues 982–997 are cytoplasmic; it reads MTAYGAFLHKGSFCRN. Residues 998 to 1016 traverse the membrane as a helical segment; that stretch reads YFNILDLLVVSVSLISFGI. Over 1017 to 1023 the chain is Extracellular; it reads QSSAINV. The helical transmembrane segment at 1024-1042 threads the bilayer; the sequence is VKILRVLRVLRPLRAINRA. Topologically, residues 1043 to 1061 are cytoplasmic; it reads KGLKHVVQCVFVAIRTIGN. A helical membrane pass occupies residues 1062–1081; the sequence is IVIVTTLLQFMFACIGVQLF. Residues 1082 to 1131 lie on the Extracellular side of the membrane; sequence KGKLYTCSDSSKQTEAECKGNYITYKDGEVDHPIIQPRSWENSKFDFDNV. Cys-1088 and Cys-1099 are joined by a disulfide. Residues 1119-1208 form a dihydropyridine binding region; the sequence is RSWENSKFDF…FQEQGEQEYK (90 aa). Residues 1132–1152 constitute an intramembrane region (pore-forming); it reads LAAMMALFTVSTFEGWPELLY. Residues 1143–1146 carry the Selectivity filter of repeat III motif; it reads TFEG. Glu-1145 contacts Ca(2+). The Extracellular segment spans residues 1153 to 1169; the sequence is RSIDSHTEDKGPIYNYR. Residues 1170 to 1191 form a helical membrane-spanning segment; it reads VEISIFFIIYIIIIAFFMMNIF. At 1192-1249 the chain is on the cytoplasmic side; sequence VGFVIVTFQEQGEQEYKNCELDKNQRQCVEYALKARPLRRYIPKNQHQYKVWYVVNST. An IV repeat occupies 1236–1509; sequence NQHQYKVWYV…LFVAVIMDNF (274 aa). Residues 1250-1271 form a helical membrane-spanning segment; it reads YFEYLMFVLILLNTICLAMQHY. Over 1272-1279 the chain is Extracellular; the sequence is GQSCLFKI. The helical transmembrane segment at 1280-1301 threads the bilayer; that stretch reads AMNILNMLFTGLFTVEMILKLI. The Cytoplasmic portion of the chain corresponds to 1302–1311; the sequence is AFKPKGYFSD. The chain crosses the membrane as a helical span at residues 1312-1331; it reads PWNVFDFLIVIGSIIDVILS. Topologically, residues 1332–1354 are extracellular; sequence ETNPAEHTQCSPSMNAEENSRIS. Residues 1355-1373 form a helical membrane-spanning segment; sequence ITFFRLFRVMRLVKLLSRG. Over 1374–1391 the chain is Cytoplasmic; the sequence is EGIRTLLWTFIKSFQALP. Residues 1392–1412 form a helical membrane-spanning segment; sequence YVALLIVMLFFIYAVIGMQVF. Residues 1413 to 1434 are Extracellular-facing; it reads GKIALNDTTEINRNNNFQTFPQ. Asn-1418 carries an N-linked (GlcNAc...) asparagine glycan. The segment at residues 1435-1453 is an intramembrane region (pore-forming); the sequence is AVLLLFRCATGEAWQDIML. The Selectivity filter of repeat IV motif lies at 1444–1447; sequence TGEA. The Extracellular segment spans residues 1454–1481; it reads ACMPGKKCAPESEPHNSTEGETPCGSSF. Residues 1460–1528 are dihydropyridine binding; sequence KCAPESEPHN…LGPHHLDEFK (69 aa). Cys-1461 and Cys-1477 are joined by a disulfide. Asn-1469 carries N-linked (GlcNAc...) asparagine glycosylation. Positions 1474 to 1516 are phenylalkylamine binding; that stretch reads ETPCGSSFAVFYFISFYMLCAFLIINLFVAVIMDNFDYLTRDW. Residues 1482-1506 traverse the membrane as a helical segment; that stretch reads AVFYFISFYMLCAFLIINLFVAVIM. Residues 1507 to 2171 are Cytoplasmic-facing; it reads DNFDYLTRDW…ADRRAGVSSL (665 aa). Positions 1641 to 1668 are important for interaction with STAC1, STAC2 and STAC3; sequence DEVTVGKFYATFLIQEYFRKFKKRKEQG. The segment at 1647 to 1667 is calmodulin-binding IQ region; it reads KFYATFLIQEYFRKFKKRKEQ. The tract at residues 1681 to 1700 is important for localization in at the junctional membrane; it reads LQAGLRTLHDIGPEIRRAIS. 2 positions are modified to phosphoserine: Ser-1700 and Ser-1721. The segment at 1760–1797 is disordered; the sequence is ISKAGNNQGDTESPSHEKLVDSTFTPSSYSSTGSNANI. The segment covering 1781–1793 has biased composition (polar residues); that stretch reads STFTPSSYSSTGS. A Phosphoserine; by PKA modification is found at Ser-1928. Disordered stretches follow at residues 1971 to 2014, 2026 to 2060, and 2114 to 2155; these read RSHS…EKLN, SGENSPCRGDSSAARRARPVSLTVPSQAGAQGRQF, and SGGA…PGCG. Residues 2130 to 2140 are compositionally biased toward basic and acidic residues; it reads NRRDPGRDRAG.

It belongs to the calcium channel alpha-1 subunit (TC 1.A.1.11) family. CACNA1C subfamily. Component of a calcium channel complex consisting of a pore-forming alpha subunit (CACNA1C) and ancillary beta, gamma and delta subunits. The channel complex contains alpha, beta, gamma and delta subunits in a 1:1:1:1 ratio, i.e. it contains only one of each type of subunit. CACNA1C channel activity is modulated by ancillary subunits, such as CACNB1, CACNB2, CACNB3, CACNA2D1 and CACNA2D4. Interacts with CACNB1. Interacts with CACNB2. Identified in a complex with CACNA2D4 and CACNB3. Interacts with CACNB3. Interacts with CACNA2D1. Interacts with the gamma subunits CACNG4, CACNG6, CACNG7 and CACNG8. Interacts with CACNA2D4. Interacts with CALM1. Interacts (via the N-terminus and the C-terminal C and IQ motifs) with CABP1; this inhibits Ca(2+)-dependent channel inactivation. The binding via the C motif is calcium independent whereas the binding via IQ requires the presence of calcium and is mutually exclusive with calmodulin binding. The binding to the cytoplasmic N-terminal domain is calcium independent but is essential for the channel modulation. Interacts (via C-terminal CDB motif) with CABP5; in a calcium-dependent manner. Interacts with CIB1; the interaction increases upon cardiomyocytes hypertrophy. Interacts with STAC1, STAC2 and STAC3; this inhibits channel inactivation, probably by hindering CALM1 binding. Phosphorylation by PKA at Ser-1928 activates the channel. Elevated levels of blood glucose lead to increased phosphorylation by PKA. As to expression, expression in cardiac muscle. In lung, expressed in airway and vascular smooth muscle cells.

The protein resides in the cell membrane. The protein localises to the sarcolemma. It localises to the perikaryon. It is found in the postsynaptic density membrane. Its subcellular location is the cell projection. The protein resides in the dendrite. The protein localises to the T-tubule. The catalysed reaction is Ca(2+)(in) = Ca(2+)(out). With respect to regulation, inhibited by dihydropyridines (DHP), such as isradipine. Inhibited by nifedipine. Channel activity is regulated by Ca(2+) and calmodulin. Binding of STAC1, STAC2 or STAC3 to a region that overlaps with the calmodulin binding site inhibits channel inactivation by Ca(2+) and calmodulin. Binding of calmodulin or CABP1 at the same regulatory sites results in opposite effects on the channel function. Shear stress and pressure increases calcium channel activity. Pore-forming, alpha-1C subunit of the voltage-gated calcium channel that gives rise to L-type calcium currents. Mediates influx of calcium ions into the cytoplasm, and thereby triggers calcium release from the sarcoplasm. Plays an important role in excitation-contraction coupling in the heart. Required for normal heart development and normal regulation of heart rhythm. Required for normal contraction of smooth muscle cells in blood vessels and in the intestine. Essential for normal blood pressure regulation via its role in the contraction of arterial smooth muscle cells. Long-lasting (L-type) calcium channels belong to the 'high-voltage activated' (HVA) group. The sequence is that of Voltage-dependent L-type calcium channel subunit alpha-1C (CACNA1C) from Oryctolagus cuniculus (Rabbit).